The sequence spans 48 residues: Light-harvesting protein B-870 beta chain (48 aa).

Over 2-21 (AERKGSISGLTDDEAQEFHK) the chain is Cytoplasmic. The a bacteriochlorophyll site is built by H20 and H38. The helical transmembrane segment at 22-44 (FWVQGFVGFTAVAVVAHFLVWVW) threads the bilayer. Topologically, residues 45 to 48 (RPWL) are periplasmic.

In terms of assembly, an alpha/beta heterodimer. The core complex is formed by different alpha and beta chains, binding bacteriochlorophyll molecules, and arranged most probably in tetrameric structures disposed around the reaction center. The non-pigmented gamma chains may constitute additional components.

The protein localises to the cell inner membrane. Functionally, antenna complexes are light-harvesting systems, which transfer the excitation energy to the reaction centers. This Rubrivivax gelatinosus (Rhodocyclus gelatinosus) protein is Light-harvesting protein B-870 beta chain (pufB).